A 277-amino-acid polypeptide reads, in one-letter code: Anamorsin homolog (277 aa).

Residues 1-134 are N-terminal SAM-like domain; it reads MALQGNVAIL…PFYPEFSDAV (134 aa). Residues 135 to 191 are linker; it reads SFTSKKQSFESAAIPLAVKSTTTQPIKKWTVLADDFGDDQDDDIIDEDTLLDDTDEV. 4 residues coordinate [2Fe-2S] cluster: C199, C210, C213, and C215. The segment at 199-215 is fe-S binding site A; the sequence is CGDAVGGKKRACKNCTC. [4Fe-4S] cluster is bound by residues C238, C241, C249, and C252. 2 consecutive short sequence motifs (cx2C motif) follow at residues 238-241 and 249-252; these read CGNC and CGSC. The tract at residues 238–252 is fe-S binding site B; sequence CGNCFKGDAFRCGSC.

This sequence belongs to the anamorsin family. As to quaternary structure, monomer. [2Fe-2S] cluster is required as a cofactor. Requires [4Fe-4S] cluster as cofactor.

The protein resides in the cytoplasm. It localises to the mitochondrion intermembrane space. Component of the cytosolic iron-sulfur (Fe-S) protein assembly (CIA) machinery. Required for the maturation of extramitochondrial Fe-S proteins. Part of an electron transfer chain functioning in an early step of cytosolic Fe-S biogenesis, facilitating the de novo assembly of a [4Fe-4S] cluster on the cytosolic Fe-S scaffold complex. Electrons are transferred from NADPH via a FAD- and FMN-containing diflavin oxidoreductase. Together with the diflavin oxidoreductase, also required for the assembly of the diferric tyrosyl radical cofactor of ribonucleotide reductase (RNR), probably by providing electrons for reduction during radical cofactor maturation in the catalytic small subunit. This Phytophthora infestans (strain T30-4) (Potato late blight agent) protein is Anamorsin homolog.